The sequence spans 237 residues: Oligoribonuclease, mitochondrial (237 aa).

The transit peptide at 1-25 (MLGVSLGARLLRGVGGRRGQFGARG) directs the protein to the mitochondrion. The Exonuclease domain occupies 43-207 (MVWVDLEMTG…DDISESIKEL (165 aa)). Mg(2+)-binding residues include D47 and E49. Position 92 is a phosphoserine (S92). Y122 bears the Phosphotyrosine mark. Position 147 (D147) interacts with Mg(2+). Residue K173 is modified to N6-acetyllysine. H194 is a catalytic residue. D199 is a binding site for Mg(2+).

The protein belongs to the oligoribonuclease family. In terms of assembly, homodimer. Homotetramer. Requires Mn(2+) as cofactor. Mg(2+) is required as a cofactor.

The protein localises to the mitochondrion intermembrane space. Its subcellular location is the mitochondrion matrix. It localises to the mitochondrion. It is found in the cytoplasm. The protein resides in the nucleus. In terms of biological role, 3'-to-5'exoribonuclease that preferentially degrades DNA and RNA oligonucleotides composed of only two nucleotides. Binds and degrades longer oligonucleotides with a lower affinity. Plays dual roles in mitochondria, scavenging nanoRNAs (small RNA oligonucleotides of &lt;5 nucleotides) that are produced by the degradosome and clearing short RNAs that are generated by RNA processing. Essential for correct initiation of mitochondrial transcription, degrading mitochondrial RNA dinucleotides to prevent RNA-primed transcription at non-canonical sites in the mitochondrial genome. Essential for embryonic development. The sequence is that of Oligoribonuclease, mitochondrial (Rexo2) from Mus musculus (Mouse).